Reading from the N-terminus, the 238-residue chain is Phosphoribosylaminoimidazole-succinocarboxamide synthase (238 aa).

The protein belongs to the SAICAR synthetase family.

It catalyses the reaction 5-amino-1-(5-phospho-D-ribosyl)imidazole-4-carboxylate + L-aspartate + ATP = (2S)-2-[5-amino-1-(5-phospho-beta-D-ribosyl)imidazole-4-carboxamido]succinate + ADP + phosphate + 2 H(+). It functions in the pathway purine metabolism; IMP biosynthesis via de novo pathway; 5-amino-1-(5-phospho-D-ribosyl)imidazole-4-carboxamide from 5-amino-1-(5-phospho-D-ribosyl)imidazole-4-carboxylate: step 1/2. The polypeptide is Phosphoribosylaminoimidazole-succinocarboxamide synthase (Desulfitobacterium hafniense (strain DSM 10664 / DCB-2)).